A 322-amino-acid polypeptide reads, in one-letter code: Glutamyl-Q tRNA(Asp) synthetase (322 aa).

Residues 28–32 (RFAPS) and Glu64 each bind L-glutamate. Positions 31-41 (PSPSGDLHFGS) match the 'HIGH' region motif. The Zn(2+) site is built by Cys120, Cys122, Tyr134, and Cys138. Positions 191 and 209 each coordinate L-glutamate. The short motif at 247 to 251 (KLSKQ) is the 'KMSKS' region element. Residue Lys250 coordinates ATP.

It belongs to the class-I aminoacyl-tRNA synthetase family. GluQ subfamily. Requires Zn(2+) as cofactor.

Catalyzes the tRNA-independent activation of glutamate in presence of ATP and the subsequent transfer of glutamate onto a tRNA(Asp). Glutamate is transferred on the 2-amino-5-(4,5-dihydroxy-2-cyclopenten-1-yl) moiety of the queuosine in the wobble position of the QUC anticodon. The polypeptide is Glutamyl-Q tRNA(Asp) synthetase (Pectobacterium atrosepticum (strain SCRI 1043 / ATCC BAA-672) (Erwinia carotovora subsp. atroseptica)).